We begin with the raw amino-acid sequence, 654 residues long: Insulin receptor substrate 1 (654 aa).

The region spanning D3–A107 is the PH domain. The residue at position 36 (Y36) is a Phosphotyrosine. The IRS-type PTB domain occupies F126–F230. Residues E228–E329 form a disordered region. Residues K235 to S245 are compositionally biased toward polar residues. S276 bears the Phosphoserine mark. Residues N307–Y321 are compositionally biased toward polar residues. Y345 carries the phosphotyrosine; by INSR modification. 6 consecutive short sequence motifs (YXXM motif) follow at residues Y345–M348, Y384–M387, Y398–M401, Y411–M414, Y430–M433, and Y466–M469. Phosphotyrosine; by INSR occurs at positions 398 and 411. At Y430 the chain carries Phosphotyrosine. Disordered stretches follow at residues S473 to C494 and Y507 to G532. Residues S514–D524 show a composition bias toward low complexity. Y563 is subject to Phosphotyrosine; by INSR.

Interacts with the NPXY motif of tyrosine-phosphorylated igf1r and insr via the PTB domain. Binds to phosphatidylinositol 3-kinase p85 subunit via the phosphorylated YXXM motifs.

Functionally, may mediate the control of various cellular processes by insulin. When phosphorylated by the insulin receptor binds specifically to various cellular proteins containing SH2 domains such as phosphatidylinositol 3-kinase p85 subunit or grb2. Activates phosphatidylinositol 3-kinase when bound to the regulatory p85 subunit. The protein is Insulin receptor substrate 1 of Xenopus tropicalis (Western clawed frog).